Reading from the N-terminus, the 541-residue chain is Copper transport protein CutJ (541 aa).

Residues 1 to 25 form the signal peptide; that stretch reads MKRNRWWIILLLFLVFLPKTSFAHA. Cu cation is bound by residues His-24 and His-110. 8 helical membrane-spanning segments follow: residues 146-166, 180-200, 228-248, 262-282, 293-313, 335-355, 370-390, and 407-427; these read AILY…LFWY, ILTG…PIQT, SIWI…IPAI, PLIF…AAVV, FLHL…VLLL, WALT…FFII, LLVK…HFLL, and WAIG…PSPP.

This sequence in the N-terminal section; belongs to the CopC family. It in the C-terminal section; belongs to the CopD family.

Its subcellular location is the cell membrane. Involved in uptake of extracellular oxidized copper under copper-limiting conditions. This Bacillus subtilis (strain 168) protein is Copper transport protein CutJ.